A 180-amino-acid chain; its full sequence is Insertion element IS1296 uncharacterized 21.4 kDa protein (180 aa).

The protein belongs to the IS150/IS1296 orfA family.

This is Insertion element IS1296 uncharacterized 21.4 kDa protein from Mycoplasma mycoides subsp. mycoides SC.